Here is a 1412-residue protein sequence, read N- to C-terminus: DNA-directed RNA polymerase subunit beta' (1412 aa).

Zn(2+)-binding residues include cysteine 70, cysteine 72, cysteine 85, and cysteine 88. Residues aspartate 460, aspartate 462, and aspartate 464 each coordinate Mg(2+). The Zn(2+) site is built by cysteine 819, cysteine 893, cysteine 900, and cysteine 903. The disordered stretch occupies residues 1393–1412 (EAFEFGTPSAPAEEPQHPAE).

The protein belongs to the RNA polymerase beta' chain family. As to quaternary structure, the RNAP catalytic core consists of 2 alpha, 1 beta, 1 beta' and 1 omega subunit. When a sigma factor is associated with the core the holoenzyme is formed, which can initiate transcription. It depends on Mg(2+) as a cofactor. The cofactor is Zn(2+).

It carries out the reaction RNA(n) + a ribonucleoside 5'-triphosphate = RNA(n+1) + diphosphate. In terms of biological role, DNA-dependent RNA polymerase catalyzes the transcription of DNA into RNA using the four ribonucleoside triphosphates as substrates. This chain is DNA-directed RNA polymerase subunit beta', found in Burkholderia mallei (strain NCTC 10229).